Here is a 166-residue protein sequence, read N- to C-terminus: Small ribosomal subunit protein uS5 (166 aa).

The S5 DRBM domain maps to 12–75 (YIEKLVQVNR…EAARRNMIQV (64 aa)).

This sequence belongs to the universal ribosomal protein uS5 family. As to quaternary structure, part of the 30S ribosomal subunit. Contacts proteins S4 and S8.

Functionally, with S4 and S12 plays an important role in translational accuracy. In terms of biological role, located at the back of the 30S subunit body where it stabilizes the conformation of the head with respect to the body. In Azotobacter vinelandii (strain DJ / ATCC BAA-1303), this protein is Small ribosomal subunit protein uS5.